The sequence spans 586 residues: Non-structural glycoprotein GNS (586 aa).

Positions 1–14 (MFLQLFNIVLIYGV) are cleaved as a signal peptide. Topologically, residues 15–544 (RTSQSTWINY…QNKEYWNEES (530 aa)) are extracellular. N-linked (GlcNAc...) asparagine; by host glycans are attached at residues asparagine 27, asparagine 68, asparagine 274, asparagine 350, asparagine 383, asparagine 476, asparagine 501, and asparagine 521. The chain crosses the membrane as a helical span at residues 545-562 (SIWGISTIITVLGIYYIY). The Cytoplasmic segment spans residues 563–586 (RKNRREKIFLNMKHRVQRFFKLDY).

This sequence belongs to the ephemerovirus glycoprotein family.

The protein localises to the host membrane. This chain is Non-structural glycoprotein GNS (GNS), found in Bos taurus (Bovine).